The following is a 146-amino-acid chain: D-aminoacyl-tRNA deacylase (146 aa).

The Gly-cisPro motif, important for rejection of L-amino acids signature appears at 137–138 (GP).

The protein belongs to the DTD family. Homodimer.

It is found in the cytoplasm. The catalysed reaction is glycyl-tRNA(Ala) + H2O = tRNA(Ala) + glycine + H(+). It carries out the reaction a D-aminoacyl-tRNA + H2O = a tRNA + a D-alpha-amino acid + H(+). Its function is as follows. An aminoacyl-tRNA editing enzyme that deacylates mischarged D-aminoacyl-tRNAs. Also deacylates mischarged glycyl-tRNA(Ala), protecting cells against glycine mischarging by AlaRS. Acts via tRNA-based rather than protein-based catalysis; rejects L-amino acids rather than detecting D-amino acids in the active site. By recycling D-aminoacyl-tRNA to D-amino acids and free tRNA molecules, this enzyme counteracts the toxicity associated with the formation of D-aminoacyl-tRNA entities in vivo and helps enforce protein L-homochirality. The chain is D-aminoacyl-tRNA deacylase from Bacillus thuringiensis subsp. konkukian (strain 97-27).